The sequence spans 171 residues: Synaptonemal complex central element protein 2 (171 aa).

The segment at Met-1 to Phe-52 is disordered. The segment covering Ser-24–Thr-36 has biased composition (basic and acidic residues). Coiled coils occupy residues Phe-52–Leu-83 and Gln-118–Glu-146.

It belongs to the SYCE family. As to quaternary structure, homodimer. Found in a complex with SYCP1 and SYCE1. Interacts with SYCP1 and SYCE1. Interacts with SYCE3. Interacts with TEX12. In terms of tissue distribution, meiotic cells (at protein level). Expressed in the ovary and testis.

The protein localises to the nucleus. Its subcellular location is the chromosome. Its function is as follows. Major component of the transverse central element of synaptonemal complexes (SCS), formed between homologous chromosomes during meiotic prophase. Requires SYCP1 in order to be incorporated into the central element. May have a role in the synaptonemal complex assembly, stabilization and recombination. The sequence is that of Synaptonemal complex central element protein 2 (Syce2) from Mus musculus (Mouse).